A 395-amino-acid chain; its full sequence is Elongation factor Tu (395 aa).

The 195-residue stretch at 10-204 folds into the tr-type G domain; that stretch reads KPHVNIGTIG…NVDEYIPLPQ (195 aa). Residues 19–26 form a G1 region; that stretch reads GHVDHGKT. Residue 19–26 coordinates GTP; the sequence is GHVDHGKT. Threonine 26 is a Mg(2+) binding site. Positions 60–64 are G2; the sequence is GITIN. Positions 81–84 are G3; it reads DCPG. GTP-binding positions include 81-85 and 136-139; these read DCPGH and NKVD. A G4 region spans residues 136–139; it reads NKVD. Residues 174–176 form a G5 region; that stretch reads SAL.

The protein belongs to the TRAFAC class translation factor GTPase superfamily. Classic translation factor GTPase family. EF-Tu/EF-1A subfamily. As to quaternary structure, monomer.

It localises to the cytoplasm. It catalyses the reaction GTP + H2O = GDP + phosphate + H(+). GTP hydrolase that promotes the GTP-dependent binding of aminoacyl-tRNA to the A-site of ribosomes during protein biosynthesis. In Amoebophilus asiaticus (strain 5a2), this protein is Elongation factor Tu.